A 452-amino-acid chain; its full sequence is Bifunctional protein GlmU (452 aa).

The pyrophosphorylase stretch occupies residues 1-233; the sequence is MTDRPFAALI…AWEVAGVNSR (233 aa). Residues 11 to 14, lysine 25, glutamine 76, 81 to 82, 104 to 106, glycine 144, glutamate 159, asparagine 174, and asparagine 231 each bind UDP-N-acetyl-alpha-D-glucosamine; these read LAAG, GT, and YGD. Residue aspartate 106 participates in Mg(2+) binding. Mg(2+) is bound at residue asparagine 231. The tract at residues 234–254 is linker; that stretch reads AELAAVEAEWQRRRRLAAMAD. Residues 255–452 form an N-acetyltransferase region; the sequence is GATLIAPETV…AMKIKKAARK (198 aa). Positions 320 and 338 each coordinate UDP-N-acetyl-alpha-D-glucosamine. The active-site Proton acceptor is histidine 350. Residues tyrosine 353 and asparagine 364 each coordinate UDP-N-acetyl-alpha-D-glucosamine. Residues alanine 367, 373-374, serine 392, alanine 410, and arginine 427 contribute to the acetyl-CoA site; that span reads NY.

The protein in the N-terminal section; belongs to the N-acetylglucosamine-1-phosphate uridyltransferase family. This sequence in the C-terminal section; belongs to the transferase hexapeptide repeat family. As to quaternary structure, homotrimer. Mg(2+) is required as a cofactor.

Its subcellular location is the cytoplasm. It carries out the reaction alpha-D-glucosamine 1-phosphate + acetyl-CoA = N-acetyl-alpha-D-glucosamine 1-phosphate + CoA + H(+). The catalysed reaction is N-acetyl-alpha-D-glucosamine 1-phosphate + UTP + H(+) = UDP-N-acetyl-alpha-D-glucosamine + diphosphate. It participates in nucleotide-sugar biosynthesis; UDP-N-acetyl-alpha-D-glucosamine biosynthesis; N-acetyl-alpha-D-glucosamine 1-phosphate from alpha-D-glucosamine 6-phosphate (route II): step 2/2. Its pathway is nucleotide-sugar biosynthesis; UDP-N-acetyl-alpha-D-glucosamine biosynthesis; UDP-N-acetyl-alpha-D-glucosamine from N-acetyl-alpha-D-glucosamine 1-phosphate: step 1/1. It functions in the pathway bacterial outer membrane biogenesis; LPS lipid A biosynthesis. Functionally, catalyzes the last two sequential reactions in the de novo biosynthetic pathway for UDP-N-acetylglucosamine (UDP-GlcNAc). The C-terminal domain catalyzes the transfer of acetyl group from acetyl coenzyme A to glucosamine-1-phosphate (GlcN-1-P) to produce N-acetylglucosamine-1-phosphate (GlcNAc-1-P), which is converted into UDP-GlcNAc by the transfer of uridine 5-monophosphate (from uridine 5-triphosphate), a reaction catalyzed by the N-terminal domain. The polypeptide is Bifunctional protein GlmU (Rhizorhabdus wittichii (strain DSM 6014 / CCUG 31198 / JCM 15750 / NBRC 105917 / EY 4224 / RW1) (Sphingomonas wittichii)).